A 524-amino-acid chain; its full sequence is MSALLREEDLNDFITPEVACIKPVSSKPSNGVDGELSVGKEPEKVEISLADCLACVGCITSSEEILLSRQNQDVFVKEWNEKKTEGYILSVSIAPQCRVSLSQYFGMGVLKFDQMFIRYLQEVWGARYVVGIQEGREESIKLMNEVADKGERKICSACPGFLMYCEKKQQDLLPLLIDVKSPMEITGHLLKDGNKEKMYHLSIMPCFDKKLESMRPESIGLVDCVITPKELVNLITPEQVDKYFATTKETIGMLEWEDAIQRVTPKWMNIDTSFKTNEGSSSGGFAWQYILHRRFQMSDNDNDNAYKIETVRGRNLDVTEFRLIDEEGKILVRSTQVFGFRNIQNLRRLVKDVKPRKLKRFIRKRPTANGNDNSISLSSSINNQDNNNTKVEEPVDFCKSDFLEVMACPRGCIAGGGNLKNGIKNGPDQDSDPNQDLNTVYMTSIPMTSIEPRHNLTLPSSQENVIVGVISHDLDDSNTIIKLQEEQKYGNKYKRKLYNPSSISETHNGDSKNTIEQPVQFTTW.

The [4Fe-4S] cluster site is built by C20, C52, C55, C58, C158, and C206. The disordered stretch occupies residues 362-388 (IRKRPTANGNDNSISLSSSINNQDNNN). The segment covering 369-388 (NGNDNSISLSSSINNQDNNN) has biased composition (low complexity). Residues C408 and C412 each contribute to the [4Fe-4S] cluster site. The interval 501-524 (SSISETHNGDSKNTIEQPVQFTTW) is disordered.

It belongs to the NARF family.

Its function is as follows. Component of the cytosolic Fe/S protein assembly machinery. Required for maturation of extramitochondrial Fe/S proteins. May play a role in the transfer of pre-assembled Fe/S clusters to target apoproteins. The protein is Cytosolic Fe-S cluster assembly factor NAR1 (NAR1) of Vanderwaltozyma polyspora (strain ATCC 22028 / DSM 70294 / BCRC 21397 / CBS 2163 / NBRC 10782 / NRRL Y-8283 / UCD 57-17) (Kluyveromyces polysporus).